The primary structure comprises 296 residues: Probable redox regulatory protein BQ2027_MB0506C (296 aa).

Belongs to the Rv0495c family.

Functionally, essential for maintaining intracellular redox homeostasis. In Mycobacterium bovis (strain ATCC BAA-935 / AF2122/97), this protein is Probable redox regulatory protein BQ2027_MB0506C.